The following is a 540-amino-acid chain: Chaperonin GroEL (540 aa).

ATP contacts are provided by residues 29–32 (TLGP), 86–90 (DGTTT), G413, 476–478 (NAA), and D492.

Belongs to the chaperonin (HSP60) family. Forms a cylinder of 14 subunits composed of two heptameric rings stacked back-to-back. Interacts with the co-chaperonin GroES.

It localises to the cytoplasm. It catalyses the reaction ATP + H2O + a folded polypeptide = ADP + phosphate + an unfolded polypeptide.. Functionally, together with its co-chaperonin GroES, plays an essential role in assisting protein folding. The GroEL-GroES system forms a nano-cage that allows encapsulation of the non-native substrate proteins and provides a physical environment optimized to promote and accelerate protein folding. The chain is Chaperonin GroEL from Streptococcus gordonii.